Consider the following 228-residue polypeptide: U1 small nuclear ribonucleoprotein C (228 aa).

A Matrin-type; degenerate zinc finger spans residues 11-43 (ATVDYCDIFLTHDSASVRKAHNTGWKHKMQVEH). Residues 83-127 (GQRGQPVGGPPRPPQPFHNGGRPGPPGRPPMGMFPPQRPMMPPPH) are disordered. Residues 105–127 (PGPPGRPPMGMFPPQRPMMPPPH) are compositionally biased toward pro residues.

Belongs to the U1 small nuclear ribonucleoprotein C family. As to quaternary structure, U1 snRNP is composed of the 7 core Sm proteins B/B', D1, D2, D3, E, F and G that assemble in a heptameric protein ring on the Sm site of the small nuclear RNA to form the core snRNP, and at least 3 U1 snRNP-specific proteins U1-70K, U1-A and U1-C. U1-C interacts with U1 snRNA and the 5' splice-site region of the pre-mRNA.

The protein resides in the nucleus. Component of the spliceosomal U1 snRNP, which is essential for recognition of the pre-mRNA 5' splice-site and the subsequent assembly of the spliceosome. U1-C is directly involved in initial 5' splice-site recognition for both constitutive and regulated alternative splicing. The interaction with the 5' splice-site seems to precede base-pairing between the pre-mRNA and the U1 snRNA. Stimulates commitment or early (E) complex formation by stabilizing the base pairing of the 5' end of the U1 snRNA and the 5' splice-site region. The chain is U1 small nuclear ribonucleoprotein C from Batrachochytrium dendrobatidis (strain JAM81 / FGSC 10211) (Frog chytrid fungus).